The sequence spans 23 residues: Defensin-like protein 2 (23 aa).

Residue Gln-1 is modified to Pyrrolidone carboxylic acid.

It belongs to the DEFL family. Forms oligomers in its native state.

In terms of biological role, possesses antifungal activity sensitive to inorganic cations. The chain is Defensin-like protein 2 from Brassica napus (Rape).